A 1113-amino-acid polypeptide reads, in one-letter code: Sterol regulatory element binding protein sbp-1 (1113 aa).

Residues 1-52 are transcriptional activation (acidic); it reads MNEEFEGDVPMSDPFLSLVTKLDDIAPFPNNDPLDFDMEHNWQEPGPSQQPD. Disordered regions lie at residues 24–68, 101–132, 206–274, and 290–345; these read DIAP…EYYD, LGGG…TSPP, SPYD…SPQN, and EVER…SQGT. Over residues 229 to 238 the composition is skewed to basic residues; it reads PHHHHHHPMP. Residues 324-337 show a composition bias toward acidic residues; sequence AEGDEDEDDEDSDS. A basic motif region spans residues 355-368; sequence ERRTAHNLIEKKYR. A bHLH domain is found at 355 to 405; the sequence is ERRTAHNLIEKKYRCSINDRIQQLKVLLCGDEAKLSKSATLRRAIEHIEEV. The helix-loop-helix motif stretch occupies residues 369–405; that stretch reads CSINDRIQQLKVLLCGDEAKLSKSATLRRAIEHIEEV. The stretch at 395 to 422 forms a coiled coil; it reads LRRAIEHIEEVEHENQVLKHHVEQMRKT. The interval 437 to 472 is disordered; the sequence is TEYSARSPVESSPSPPRNERKRSRMSTTTPMKNGTR. Transmembrane regions (helical) follow at residues 478 to 498 and 541 to 561; these read VTLF…LLAG and MSYV…KLLI.

Post-translationally, processed in the Golgi apparatus, releasing the protein from the membrane. Ubiquitinated; the nuclear form has a rapid turnover and is rapidly ubiquitinated and degraded by the proteasome in the nucleus. In terms of tissue distribution, broadly expressed, including many cells in the head. Expressed in the intestine.

The protein resides in the nucleus. It localises to the endoplasmic reticulum membrane. In terms of biological role, transcription factor involved in maintaining normal fat levels. Regulates the expression of genes involved in lipid metabolism in response to nutrient availability, such as the fatty-acid desaturases fat-5, fat-6 and fat-7. In response to a high-glucose diet, promotes fatty acid synthesis, elongation and desaturation, acting in concert with transcription factor mxl-3. Plays a role in synthesis of monomethyl branched-chain fatty acids (mmBCFAs) as well as other very-long-chain fatty acids. Downstream of the cis-Golgi membrane protein eas-1/GOLT1B and the E3 ubiquitin ligase rnf-145/RNF145, plays a role in the regulation of glial size, perhaps by modulating synthesis of long-chain polyunsaturated fatty-acids (LC-PUFA). Modulates expression of genes in the one-carbon cycle, which produces the methyl donor S-adenosylmethionine (SAM). Probably involved in a feedback loop in which decreased levels of SAM lead to increased transcriptional activity of sbp-1, thereby causing lipid accumulation. Involved in the negative regulation of zinc homeostasis. Involved in the response to simulated microgravity, in concert with Mediator complex subunit mdt-15, probably acting in the intestine. Plays a role in transgenerational lipid accumulation in response to a high-fat diet, probably acting by upregulating wdr-5.1 expression to increase the level of trimethylated 'Lys-4' histone H3 (H3K4me3), which may then induce the expression of fat-5, fat-6 and fat-7. May act as an oxygen sensor for lipid metabolism. Precursor of the transcription factor form, which is embedded in the endoplasmic reticulum membrane. Processing of this form allows release of the transcription factor form that translocates into the nucleus and activates transcription of genes involved in sterol biosynthesis and lipid homeostasis. Functionally, key transcription factor that regulates expression of genes involved in sterol biosynthesis and lipid homeostasis. This is Sterol regulatory element binding protein sbp-1 from Caenorhabditis elegans.